Reading from the N-terminus, the 54-residue chain is UPF0391 membrane protein Daro_2080 (54 aa).

2 consecutive transmembrane segments (helical) span residues 5–25 (AIVF…GIAA) and 30–50 (IAKI…VMGF).

Belongs to the UPF0391 family.

The protein resides in the cell membrane. The sequence is that of UPF0391 membrane protein Daro_2080 from Dechloromonas aromatica (strain RCB).